The primary structure comprises 470 residues: Growth/differentiation factor 6 (470 aa).

Residues 1–22 form the signal peptide; the sequence is MDTSRVLLSAVFLISFLWDLPG. The propeptide occupies 23–350; that stretch reads FQQASISSSS…SPSPGRRRRR (328 aa). Residues 28–98 form a disordered region; the sequence is ISSSSSSAEL…REPPGRGPRV (71 aa). Basic and acidic residues predominate over residues 45–80; that stretch reads SRKEGRMPRAPRENATAREPLDRQEPPPRPQEEPQR. Asn-120 carries N-linked (GlcNAc...) asparagine glycosylation. 2 disordered regions span residues 247–272 and 308–366; these read PGAA…SLGF and TEVV…KKSR. The span at 321-333 shows a compositional bias: pro residues; the sequence is GPPPPPPPPPPSG. The segment covering 345–366 has biased composition (basic residues); it reads GRRRRRTAFASRHGKRHGKKSR. 3 disulfides stabilise this stretch: Cys-369–Cys-435, Cys-398–Cys-467, and Cys-402–Cys-469.

It belongs to the TGF-beta family. Homodimer; disulfide-linked.

Its subcellular location is the secreted. Its function is as follows. Growth factor that controls proliferation and cellular differentiation in the retina and bone formation. Plays a key role in regulating apoptosis during retinal development. Establishes dorsal-ventral positional information in the retina and controls the formation of the retinotectal map. Required for normal formation of bones and joints in the limbs, skull, digits and axial skeleton. Plays a key role in establishing boundaries between skeletal elements during development. Regulation of GDF6 expression seems to be a mechanism for evolving species-specific changes in skeletal structures. Seems to positively regulate differentiation of chondrogenic tissue through the growth factor receptors subunits BMPR1A, BMPR1B, BMPR2 and ACVR2A, leading to the activation of SMAD1-SMAD5-SMAD8 complex. The regulation of chondrogenic differentiation is inhibited by NOG. Also involved in the induction of adipogenesis from mesenchymal stem cells. This mechanism acts through the growth factor receptors subunits BMPR1A, BMPR2 and ACVR2A and the activation of SMAD1-SMAD5-SMAD8 complex and MAPK14/p38. This is Growth/differentiation factor 6 (GDF6) from Bos taurus (Bovine).